The chain runs to 231 residues: MSDTAASMPYPVITIDGPTASGKGTVAHQIADLLGFHLLDSGSLYRLVALASMRENIDDHDVESLVRIARELDVRFKADRIWLKGEDVSLALRHESVGNQASAIAVHGAVREALHARQRAFLEAPGLVADGRDMGTVVFPEAVLKVFLTASVQARAERRYKQLIAKGFSATVESLSQDLEARDLRDRTRSVAPLRPAQDARQLDSSDMTVDEVVAQVLDWYRQVQGANKAN.

17 to 25 (GPTASGKGT) lines the ATP pocket.

It belongs to the cytidylate kinase family. Type 1 subfamily.

It is found in the cytoplasm. It catalyses the reaction CMP + ATP = CDP + ADP. The enzyme catalyses dCMP + ATP = dCDP + ADP. In Ralstonia pickettii (strain 12J), this protein is Cytidylate kinase.